Here is a 247-residue protein sequence, read N- to C-terminus: Probable transcriptional regulatory protein GTNG_2524 (247 aa).

A compositionally biased stretch (basic residues) spans 1–14 (MAGHSKWKNIQRRK). The tract at residues 1-21 (MAGHSKWKNIQRRKNAQDAKR) is disordered.

It belongs to the TACO1 family.

The protein localises to the cytoplasm. The sequence is that of Probable transcriptional regulatory protein GTNG_2524 from Geobacillus thermodenitrificans (strain NG80-2).